Here is a 379-residue protein sequence, read N- to C-terminus: GDSL esterase/lipase At3g05180 (379 aa).

Positions 1-27 (METLFHTLLRLLLFVAISHTLSPLAGS) are cleaved as a signal peptide. The active-site Nucleophile is Ser-43. N-linked (GlcNAc...) asparagine glycans are attached at residues Asn-294 and Asn-330. Catalysis depends on residues Asp-349 and His-352.

This sequence belongs to the 'GDSL' lipolytic enzyme family.

The protein localises to the secreted. This is GDSL esterase/lipase At3g05180 from Arabidopsis thaliana (Mouse-ear cress).